The following is a 1041-amino-acid chain: DNA polymerase catalytic subunit (1041 aa).

Residues 1–23 (MAFFNPYFKSKNKGSDMPPKQSM) are disordered.

Belongs to the DNA polymerase type-B family.

Its subcellular location is the host nucleus. The enzyme catalyses DNA(n) + a 2'-deoxyribonucleoside 5'-triphosphate = DNA(n+1) + diphosphate. The catalysed reaction is Endonucleolytic cleavage to 5'-phosphomonoester.. In terms of biological role, replicates viral genomic DNA. The replication complex is composed of six viral proteins: the DNA polymerase, processivity factor, primase, primase-associated factor, helicase, and ssDNA-binding protein. Additionally, the polymerase contains an intrinsic ribonuclease H (RNase H) activity that specifically degrades RNA/DNA heteroduplexes or duplex DNA substrates in the 5' to 3' direction. Therefore, it can catalyze the excision of the RNA primers that initiate the synthesis of Okazaki fragments at a replication fork during viral DNA replication. The protein is DNA polymerase catalytic subunit of Elephantid herpesvirus 1 (isolate Asian elephant/Berlin/Kiba/1998) (EIHV-1).